A 1680-amino-acid polypeptide reads, in one-letter code: SWI/SNF chromatin-remodeling complex subunit snf22 (1680 aa).

Disordered regions lie at residues 61 to 135, 203 to 258, 274 to 300, and 367 to 427; these read QQMR…SQAS, NNSF…HSFS, RRGS…ASPY, and YVYR…VPPT. Positions 62–91 are enriched in polar residues; that stretch reads QMRNQSSEFPDAENTNLRKQQDTLPTTGFN. 2 stretches are compositionally biased toward low complexity: residues 118–127 and 222–233; these read GNGNVGLNNP and SSLPHSFASPSS. The segment covering 234–245 has biased composition (polar residues); that stretch reads TFEQPHTVQSRA. 3 stretches are compositionally biased toward low complexity: residues 247 to 258, 282 to 299, and 374 to 392; these read SVDTTSSSHSFS, PSTF…LASP, and PPSA…SVDP. Over residues 406–419 the composition is skewed to polar residues; it reads PSPSASALKTQSHV. One can recognise a QLQ domain in the interval 429-465; that stretch reads KLNHAQLAMLKSQIVAYNCLNSPNGQVPPAVQQAIFG. Polar residues predominate over residues 477 to 489; it reads SMPFQQNVPQMSS. Residues 477-499 are disordered; the sequence is SMPFQQNVPQMSSVKKDTPTRDA. Basic and acidic residues predominate over residues 490–499; that stretch reads VKKDTPTRDA. The HSA domain maps to 704-776; it reads QKTEHAMRQK…ARQRLQALRA (73 aa). Polar residues predominate over residues 817 to 832; sequence SNIHSGNTSGKGSNSA. Positions 817 to 836 are disordered; the sequence is SNIHSGNTSGKGSNSAELEA. The 166-residue stretch at 881–1046 folds into the Helicase ATP-binding domain; that stretch reads LSLYNNNLNG…WALLNFVLPK (166 aa). 894–901 provides a ligand contact to ATP; that stretch reads DEMGLGKT. A DEGH box motif is present at residues 996–999; that stretch reads DEGH. Residues 1191–1354 form the Helicase C-terminal domain; that stretch reads LLDRILPKLF…STPEEREAFL (164 aa). Residues 1466 to 1511 are disordered; the sequence is TVDDPSSTLMPRKRGRPRKKTNSGSSLSTPLSQESSLARSGRKNTP. The span at 1476 to 1486 shows a compositional bias: basic residues; sequence PRKRGRPRKKT. Over residues 1488-1502 the composition is skewed to low complexity; the sequence is SGSSLSTPLSQESSL. In terms of domain architecture, Bromo spans 1513-1623; the sequence is YKQKALRRYC…KTLKEVIEDL (111 aa).

This sequence belongs to the SNF2/RAD54 helicase family. Component of the SWI/SNF global transcription activator complex composed of at least arp9, arp42, snf5, snf22, snf30, sbf59, sol1, ssr1, ssr2, ssr3, ssr4 and tfg3.

It is found in the nucleus. Functionally, helicase. Component of the SWI/SNF complex, an ATP-dependent chromatin remodeling complex, required for the positive and negative regulation of gene expression of a large number of genes. It changes chromatin structure by altering DNA-histone contacts within a nucleosome, leading eventually to a change in nucleosome position, thus facilitating or repressing binding of gene-specific transcription factors. This Schizosaccharomyces pombe (strain 972 / ATCC 24843) (Fission yeast) protein is SWI/SNF chromatin-remodeling complex subunit snf22 (snf22).